The following is a 686-amino-acid chain: Translation initiation factor IF-2 (686 aa).

The disordered stretch occupies residues 54–105 (KPSVADEFEVEEKVVRSKKNSNKKKKKGKGNEDKRQENFAGRQQTQTVETPD). A compositionally biased stretch (basic residues) spans 69–81 (RSKKNSNKKKKKG). The tr-type G domain maps to 188–357 (ERPAVVTIMG…LLISEVEEYK (170 aa)). Residues 197–204 (GHVDHGKT) form a G1 region. 197 to 204 (GHVDHGKT) contributes to the GTP binding site. The interval 222-226 (GITQH) is G2. The interval 243 to 246 (DTPG) is G3. GTP contacts are provided by residues 243-247 (DTPGH) and 297-300 (NKMD). The G4 stretch occupies residues 297–300 (NKMD). Residues 333-335 (SAI) form a G5 region.

Belongs to the TRAFAC class translation factor GTPase superfamily. Classic translation factor GTPase family. IF-2 subfamily.

The protein resides in the cytoplasm. One of the essential components for the initiation of protein synthesis. Protects formylmethionyl-tRNA from spontaneous hydrolysis and promotes its binding to the 30S ribosomal subunits. Also involved in the hydrolysis of GTP during the formation of the 70S ribosomal complex. The protein is Translation initiation factor IF-2 of Bacillus anthracis (strain A0248).